The following is a 270-amino-acid chain: MAGAENWPGQQLELDEDEASCCRWGAQHAGARELAALYSPGKRLQEWCSVILCFSLIAHNLVHLLLLARWEDTPLVILGVVAGALIADFLSGLVHWGADTWGSVELPIVGKAFIRPFREHHIDPTAITRHDFIETNGDNCLVTLLPLLNMAYKFRTHSPEALEQLYPWECFVFCLIIFGTFTNQIHKWSHTYFGLPRWVTLLQDWHVILPRKHHRIHHVSPHETYFCITTGWLNYPLEKIGFWRRLEDLIQGLTGEKPRADDMKWAQKIK.

The next 3 helical transmembrane spans lie at 47 to 67, 74 to 94, and 161 to 181; these read WCSV…LLLL, PLVI…SGLV, and ALEQ…FGTF. The short motif at 186–190 is the Histidine box-1 element; sequence HKWSH. The Histidine box-2 signature appears at 213-217; it reads HHRIH.

The protein belongs to the fatty acid desaturase CarF family.

It is found in the endoplasmic reticulum membrane. It carries out the reaction a 1-(1,2-saturated alkyl)-2-acyl-sn-glycero-3-phosphoethanolamine + 2 Fe(II)-[cytochrome b5] + O2 + 2 H(+) = a 1-O-(1Z-alkenyl)-2-acyl-sn-glycero-3-phosphoethanolamine + 2 Fe(III)-[cytochrome b5] + 2 H2O. The catalysed reaction is a 1-O-hexadecyl-2-acyl-sn-glycero-3-phosphoethanolamine + 2 Fe(II)-[cytochrome b5] + O2 + 2 H(+) = a 1-O-(1Z-hexadecenyl)-2-acyl-sn-glycero-3-phosphoethanolamine + 2 Fe(III)-[cytochrome b5] + 2 H2O. It catalyses the reaction a 1-O-octadecyl-2-acyl-sn-glycero-3-phosphoethanolamine + 2 Fe(II)-[cytochrome b5] + O2 + 2 H(+) = a 1-O-(1Z-octadecenyl)-2-acyl-sn-glycero-3-phosphoethanolamine + 2 Fe(III)-[cytochrome b5] + 2 H2O. The enzyme catalyses a 1-O-(9Z-octadecenyl)-2-acyl-sn-glycero-3-phosphoethanolamine + 2 Fe(II)-[cytochrome b5] + O2 + 2 H(+) = a 1-O-(1Z,9Z-octadecadienyl)-2-acyl-sn-glycero-3-phosphoethanolamine + 2 Fe(III)-[cytochrome b5] + 2 H2O. Its pathway is lipid metabolism; fatty acid metabolism. Functionally, plasmanylethanolamine desaturase involved in plasmalogen biogenesis in the endoplasmic reticulum membrane. Plasmalogens are glycerophospholipids with a hydrocarbon chain linked by a vinyl ether bond at the glycerol sn-1 position, and are involved in antioxidative and signaling mechanisms. The sequence is that of Plasmanylethanolamine desaturase 1 from Homo sapiens (Human).